The primary structure comprises 96 residues: Cysteine proteinase (96 aa).

Cys-25 and Cys-79 are oxidised to a cystine. Active-site residues include His-31 and Asn-58.

Belongs to the peptidase C1 family.

The chain is Cysteine proteinase from Carica papaya (Papaya).